Here is a 303-residue protein sequence, read N- to C-terminus: MSLVECVPNFSEGRDRDRVNRIRDAIASVDTVKILDVEMDPNHNRSVITFVCDSSKAVDAAFAGIKAAAEIIDMDAHRGEHPRFGAADVIPFVPLQDTKMETCVRLARDLGKRVGEELGIPVYLYAEAAQRPDRSDLAAIRNKNFQYEQLKEAIKEEKWKPDFGPSVVGKAGASIIGARDFLIAYNVNLNTSNMEIGKKIASAIRAKDGGLTFVKSLAFFLKDKNMVQISMNLTNYRKTPIYRAYELVRLEAARYGVLPVESEIVGLVPEQALIDVAKYYLQLNGFDEGNILERKMEKAANME.

Catalysis depends on His-81, which acts as the For formimidoyltransferase activity. Residue Gly-164 to Gly-172 participates in folate binding.

The protein belongs to the formiminotransferase family.

It is found in the cytoplasm. It catalyses the reaction (6S)-5-formyl-5,6,7,8-tetrahydrofolate + L-glutamate = N-formyl-L-glutamate + (6S)-5,6,7,8-tetrahydrofolate + H(+). It carries out the reaction 5-formimidoyltetrahydrofolate + L-glutamate = N-formimidoyl-L-glutamate + (6S)-5,6,7,8-tetrahydrofolate. The enzyme catalyses (6S)-5-formyl-5,6,7,8-tetrahydrofolate + ATP = (6R)-5,10-methenyltetrahydrofolate + ADP + phosphate. It functions in the pathway amino-acid degradation; L-histidine degradation into L-glutamate; L-glutamate from N-formimidoyl-L-glutamate (transferase route): step 1/1. The protein operates within one-carbon metabolism; tetrahydrofolate interconversion. Catalyzes the transfer of the formyl group from N-formylglutamate to tetrahydrofolate (THF) to yield 5-formyltetrahydrofolate (5-CHO-THF) and glutamate (Glu). The triglutamate form of 5-CHO-THF (5-CHO-THF-Glu3) can also be used as substrate. It can also catalyze the transfer of the formimino group from N-formiminoglutamate to tetrahydrofolate (THF) to yield 5-formiminotetrahydrofolate (5-NH=CH-THF) and glutamate (Glu). It can replace YgfA to catalyze the irreversible ATP-dependent transformation of 5-CHO-THF to form 5,10-methenyltetrahydrofolate (5,10-CH=THF). This Thermoplasma acidophilum (strain ATCC 25905 / DSM 1728 / JCM 9062 / NBRC 15155 / AMRC-C165) protein is Glutamate formimidoyltransferase.